The primary structure comprises 570 residues: Peptidyl-prolyl cis-trans isomerase CYP63 (570 aa).

One can recognise a PPIase cyclophilin-type domain in the interval 10 to 174; it reads FLDVSIGGDP…SPVKIIDCGE (165 aa). The segment at 180–570 is disordered; the sequence is AHDAAEREKG…GKRGLVSYAD (391 aa). The span at 203 to 219 shows a compositional bias: basic and acidic residues; that stretch reads VSDREAKETRKKESNEK. 2 stretches are compositionally biased toward low complexity: residues 229–238 and 246–259; these read SSDSYSSSSD and EAYSSSSYESSSSS. Over residues 262–292 the composition is skewed to basic residues; it reads KHRKRKSTTRHKGRRGERKSKGRSGKKKARP. The segment covering 297–309 has biased composition (low complexity); that stretch reads STNSSSDTESSSS. Residues 323 to 339 show a composition bias toward basic and acidic residues; it reads VKVDNADQHANLDDSVK. Phosphoserine is present on Ser-340. Residues 340-351 are compositionally biased toward basic residues; sequence SRSRSPIRRRNQ. A compositionally biased stretch (low complexity) spans 352-365; that stretch reads NSRSKSPSRSPVRV. 2 stretches are compositionally biased toward basic and acidic residues: residues 387-397 and 437-467; these read SPREKPTEETV and SPPRHWPDRRNFQDRNRDRYPSNRSYSERSP. Residues 468-490 are compositionally biased toward basic residues; the sequence is RGRFRSPPRRRSPPRYNRRRRST. Over residues 495–505 the composition is skewed to basic and acidic residues; the sequence is DGYRRRLRDGS. The span at 509-523 shows a compositional bias: basic residues; that stretch reads SPRHRSRSQSPRKRQ. A compositionally biased stretch (low complexity) spans 546–555; the sequence is SPAESLSPSH.

The protein belongs to the cyclophilin-type PPIase family. As to quaternary structure, interacts with SNRNP35, RNU1, SCL28, SCL30, SR30 and SR34. The binding to SR34 is phosphorylation-dependent. As to expression, ubiquitous.

The protein resides in the nucleus. It is found in the nucleoplasm. It localises to the nucleus speckle. The enzyme catalyses [protein]-peptidylproline (omega=180) = [protein]-peptidylproline (omega=0). PPIases accelerate the folding of proteins. It catalyzes the cis-trans isomerization of proline imidic peptide bonds in oligopeptides. May be implicated in the folding, transport, and assembly of proteins. Probably involved in early steps of spliceosomal assembly. The protein is Peptidyl-prolyl cis-trans isomerase CYP63 (CYP63) of Arabidopsis thaliana (Mouse-ear cress).